A 408-amino-acid chain; its full sequence is MPSQKIISALAEIESSASPQNKLQLYNDLLSETVSASPEPQLADDLIYYLDSVLSEDLSIVAARPILDSFIYTLRKLSSETQIKVAQHAVNLLQSRSASVEEQDAQIREILADAYEAEEEYIAAARALQGIHIDSSQRLVSDSAKVKLWIRIVRLYLEEDDTTSAEAFLNRIKNLPSKIEDHELKLHFRLSQARIQDARRRFLDASQEYFAVSLAAGVDESDRLQALAAAIRCAVLAPAGPQRSRTLATLYKDDRATSVEEFGILEKMFLDRLLTPEEVSAFAQRLAPHQLAQTADGTTVLDKAVVEHNLVAASKLYENIKTDALGAILGLQASGDLTAGEKAEAYAARMVEQGRLSGSIDQIDGIIYFESNTTATGRHIRQWDAGVQGLSEGVERVATNIAEGHLVR.

The PCI domain occupies 194-374 (RIQDARRRFL…GIIYFESNTT (181 aa)).

This sequence belongs to the CSN4 family. Component of the COP9 signalosome (CSN) complex.

It localises to the cytoplasm. The protein resides in the nucleus. Its function is as follows. Component of the COP9 signalosome (CSN) complex that acts as an regulator of the ubiquitin (Ubl) conjugation pathway by mediating the deneddylation of the cullin subunit of SCF-type E3 ubiquitin-protein ligase complexes. The CSN complex seems to link protein degradation to sexual development. Required for fruit body formation. The protein is COP9 signalosome complex subunit 4 (csnD) of Emericella nidulans (strain FGSC A4 / ATCC 38163 / CBS 112.46 / NRRL 194 / M139) (Aspergillus nidulans).